Here is a 517-residue protein sequence, read N- to C-terminus: L-amino-acid oxidase (517 aa).

The first 19 residues, methionine 1–alanine 19, serve as a signal peptide directing secretion. A disulfide bond links cysteine 29 and cysteine 192. FAD is bound by residues methionine 62–alanine 63, glutamate 82–alanine 83, arginine 90, and glycine 106–arginine 109. Position 109 (arginine 109) interacts with substrate. An N-linked (GlcNAc...) asparagine glycan is attached at asparagine 191. Position 280 (valine 280) interacts with FAD. A disulfide bridge links cysteine 350 with cysteine 431. Asparagine 380 carries an N-linked (GlcNAc...) asparagine glycan. Tyrosine 391 contacts substrate. Residues glutamate 476 and glycine 483–threonine 488 contribute to the FAD site. Glycine 483 to tryptophan 484 contacts substrate.

The protein belongs to the flavin monoamine oxidase family. FIG1 subfamily. As to quaternary structure, monomer. This is in contrast with most of its orthologs, that are non-covalently linked homodimers. The cofactor is FAD. N-glycosylated. As to expression, expressed by the venom gland.

The protein localises to the secreted. The enzyme catalyses an L-alpha-amino acid + O2 + H2O = a 2-oxocarboxylate + H2O2 + NH4(+). It catalyses the reaction L-leucine + O2 + H2O = 4-methyl-2-oxopentanoate + H2O2 + NH4(+). The catalysed reaction is L-phenylalanine + O2 + H2O = 3-phenylpyruvate + H2O2 + NH4(+). It carries out the reaction L-tryptophan + O2 + H2O = indole-3-pyruvate + H2O2 + NH4(+). The enzyme catalyses L-methionine + O2 + H2O = 4-methylsulfanyl-2-oxobutanoate + H2O2 + NH4(+). It catalyses the reaction L-isoleucine + O2 + H2O = (S)-3-methyl-2-oxopentanoate + H2O2 + NH4(+). The catalysed reaction is L-arginine + O2 + H2O = 5-guanidino-2-oxopentanoate + H2O2 + NH4(+). It carries out the reaction L-aspartate + O2 + H2O = oxaloacetate + H2O2 + NH4(+). The enzyme catalyses L-histidine + O2 + H2O = 3-(imidazol-5-yl)pyruvate + H2O2 + NH4(+). It catalyses the reaction L-asparagine + O2 + H2O = 2-oxosuccinamate + H2O2 + NH4(+). The catalysed reaction is L-tyrosine + O2 + H2O = 3-(4-hydroxyphenyl)pyruvate + H2O2 + NH4(+). It carries out the reaction L-glutamine + O2 + H2O = 2-oxoglutaramate + H2O2 + NH4(+). The enzyme catalyses L-alanine + O2 + H2O = pyruvate + H2O2 + NH4(+). It catalyses the reaction L-lysine + O2 + H2O = 6-amino-2-oxohexanoate + H2O2 + NH4(+). The catalysed reaction is L-glutamate + O2 + H2O = H2O2 + 2-oxoglutarate + NH4(+). In terms of biological role, catalyzes an oxidative deamination of predominantly hydrophobic and aromatic L-amino acids, thus producing hydrogen peroxide that may contribute to the diverse toxic effects of this enzyme. Is highly active against L-Tyr, L-Asp, L-Phe, L-Glu, L-Trp, L-His, L-Gln, L-Ile, L-Met, L-Leu and moderately active against L-Lys, L-Arg, L-Ala and L-Asn. Exhibits diverse biological activities, such as edema, inflammatory cell infiltration, cytotoxicity and apoptosis, as well as induction of platelet aggregation. Effects of snake L-amino oxidases on platelets are controversial, since they either induce aggregation or inhibit agonist-induced aggregation. These different effects are probably due to different experimental conditions. This protein may also induce hemorrhage, hemolysis, and have antibacterial and antiparasitic activities. This Bungarus fasciatus (Banded krait) protein is L-amino-acid oxidase.